A 244-amino-acid polypeptide reads, in one-letter code: 5-oxoprolinase subunit A (244 aa).

This sequence belongs to the LamB/PxpA family. In terms of assembly, forms a complex composed of PxpA, PxpB and PxpC.

The enzyme catalyses 5-oxo-L-proline + ATP + 2 H2O = L-glutamate + ADP + phosphate + H(+). Its function is as follows. Catalyzes the cleavage of 5-oxoproline to form L-glutamate coupled to the hydrolysis of ATP to ADP and inorganic phosphate. The sequence is that of 5-oxoprolinase subunit A from Salmonella newport (strain SL254).